Reading from the N-terminus, the 1661-residue chain is Microtubule cross-linking factor 2 (1661 aa).

The interval 1–187 is disordered; it reads MEAPAAEPPV…EPSVAASSVG (187 aa). Composition is skewed to low complexity over residues 76-94 and 133-149; these read AVAP…VRTG and LLGL…SAAG. The segment covering 167–176 has biased composition (pro residues); sequence QQPPRPPASP. Residues 211–240 form a required for association with Golgi apparatus membrane region; it reads PSGLVRELEELRSENDYLKDEIEELRAEML. Coiled coils occupy residues 218-281 and 310-351; these read LEEL…AERR and SMRL…LQTE. A disordered region spans residues 353 to 373; the sequence is ERPREHSLKKRGTRSLGKADK. 3 coiled-coil regions span residues 450–484, 820–865, and 1083–1117; these read LKLV…MKDH, IKEL…LKED, and SQEK…LQKA. The residue at position 1169 (Ser1169) is a Phosphoserine. Residues 1196–1221 are disordered; sequence AFGFVSSEPGDPEKDTKEKPGLSSRD. The span at 1206–1215 shows a compositional bias: basic and acidic residues; that stretch reads DPEKDTKEKP. Ser1255 is subject to Phosphoserine. Disordered stretches follow at residues 1432 to 1456, 1538 to 1563, and 1636 to 1661; these read RPCC…DSSK, RAPS…ASYH, and HSPS…PPSE. Basic and acidic residues predominate over residues 1652–1661; sequence GEERALPPSE.

This sequence belongs to the MTCL family. In terms of assembly, interacts with CLASP1 and CLASP2. The C-terminal 25 kDa form occurs as a monomer. Proteolytically cleaved in primary hepatocytes into a C-terminal 80 kDa form. Proteolytically cleaved into a C-terminal SOGA 25 kDa form that is detected in plasma. Post-translationally, phosphorylated during mitosis in a CDK1-dependent manner.

It is found in the cytoplasm. Its subcellular location is the cytoskeleton. The protein localises to the golgi apparatus membrane. The protein resides in the midbody. It localises to the secreted. Its function is as follows. Microtubule-associated factor that enables integration of the centrosomal and Golgi-associated microtubules on the Golgi membrane, supporting directional migration. Preferentially acts on the perinuclear microtubules accumulated around the Golgi. Associates with the Golgi membrane through the N-terminal coiled-coil region and directly binds microtubules through the C-terminal domain. Required for faithful chromosome segregation during mitosis. Regulates autophagy by playing a role in the reduction of glucose production in an adiponectin- and insulin-dependent manner. This is Microtubule cross-linking factor 2 from Homo sapiens (Human).